We begin with the raw amino-acid sequence, 179 residues long: Large ribosomal subunit protein uL6 (179 aa).

It belongs to the universal ribosomal protein uL6 family. As to quaternary structure, part of the 50S ribosomal subunit.

This protein binds to the 23S rRNA, and is important in its secondary structure. It is located near the subunit interface in the base of the L7/L12 stalk, and near the tRNA binding site of the peptidyltransferase center. In Methylacidiphilum infernorum (isolate V4) (Methylokorus infernorum (strain V4)), this protein is Large ribosomal subunit protein uL6.